A 562-amino-acid polypeptide reads, in one-letter code: Oxygen-dependent choline dehydrogenase (562 aa).

4 to 33 (DYIIIGAGSAGNVLATRLTEDPNTTVLLLE) is a binding site for FAD. Catalysis depends on His-473, which acts as the Proton acceptor.

Belongs to the GMC oxidoreductase family. It depends on FAD as a cofactor.

The enzyme catalyses choline + A = betaine aldehyde + AH2. The catalysed reaction is betaine aldehyde + NAD(+) + H2O = glycine betaine + NADH + 2 H(+). Its pathway is amine and polyamine biosynthesis; betaine biosynthesis via choline pathway; betaine aldehyde from choline (cytochrome c reductase route): step 1/1. Involved in the biosynthesis of the osmoprotectant glycine betaine. Catalyzes the oxidation of choline to betaine aldehyde and betaine aldehyde to glycine betaine at the same rate. The protein is Oxygen-dependent choline dehydrogenase of Escherichia coli (strain SMS-3-5 / SECEC).